Here is a 393-residue protein sequence, read N- to C-terminus: MDVKRFKRVFLIVMDSVGIGEAPDAKAFGDQGAHTLGHIAERMNGLHMPNMAALGLSHIRPIQGIEKVDKPKAHYGIMQEISSGKDTMTGHWEIMGLHIREPFRVFPNGFPEELLNEIRELTGREILGNKVASGTEIIKELGDEHVKTGALIVYTSADSVLQIAAHEEVVPLEELYDICKKVRALTLDPKYMVGRIIARPFIGADGNWERTSNRHDYALKPFGRTVMNELKDAGFDSIAIGKISDIYDGEGVTESIRTISNDDGMEKLVRSMDQSFTGLSFINLVDFDAKYGHRRDPIGYGQALEQFDQQLADVVEKIGEEDVLIITADHGNDPVHHGTDHTREFVPLLVYTRGIKEGKDLGLRKTFADVGATIADNFQVEAPSIGTSFLHEL.

The Mn(2+) site is built by D15, D288, H293, D329, H330, and H341.

It belongs to the phosphopentomutase family. Requires Mn(2+) as cofactor.

Its subcellular location is the cytoplasm. It catalyses the reaction 2-deoxy-alpha-D-ribose 1-phosphate = 2-deoxy-D-ribose 5-phosphate. The catalysed reaction is alpha-D-ribose 1-phosphate = D-ribose 5-phosphate. Its pathway is carbohydrate degradation; 2-deoxy-D-ribose 1-phosphate degradation; D-glyceraldehyde 3-phosphate and acetaldehyde from 2-deoxy-alpha-D-ribose 1-phosphate: step 1/2. Isomerase that catalyzes the conversion of deoxy-ribose 1-phosphate (dRib-1-P) and ribose 1-phosphate (Rib-1-P) to deoxy-ribose 5-phosphate (dRib-5-P) and ribose 5-phosphate (Rib-5-P), respectively. In Halalkalibacterium halodurans (strain ATCC BAA-125 / DSM 18197 / FERM 7344 / JCM 9153 / C-125) (Bacillus halodurans), this protein is Phosphopentomutase.